Here is a 433-residue protein sequence, read N- to C-terminus: Glutamate-1-semialdehyde 2,1-aminomutase (433 aa).

Lys-273 carries the post-translational modification N6-(pyridoxal phosphate)lysine.

Belongs to the class-III pyridoxal-phosphate-dependent aminotransferase family. HemL subfamily. In terms of assembly, homodimer. Pyridoxal 5'-phosphate is required as a cofactor.

It localises to the cytoplasm. It carries out the reaction (S)-4-amino-5-oxopentanoate = 5-aminolevulinate. The protein operates within porphyrin-containing compound metabolism; protoporphyrin-IX biosynthesis; 5-aminolevulinate from L-glutamyl-tRNA(Glu): step 2/2. It participates in porphyrin-containing compound metabolism; chlorophyll biosynthesis. This is Glutamate-1-semialdehyde 2,1-aminomutase from Rippkaea orientalis (strain PCC 8801 / RF-1) (Cyanothece sp. (strain PCC 8801)).